We begin with the raw amino-acid sequence, 418 residues long: UDP-N-acetylglucosamine 1-carboxyvinyltransferase (418 aa).

23 to 24 provides a ligand contact to phosphoenolpyruvate; sequence KN. Residue arginine 93 coordinates UDP-N-acetyl-alpha-D-glucosamine. Aspartate 117 functions as the Proton donor in the catalytic mechanism. UDP-N-acetyl-alpha-D-glucosamine contacts are provided by aspartate 305 and valine 327.

Belongs to the EPSP synthase family. MurA subfamily.

The protein localises to the cytoplasm. It carries out the reaction phosphoenolpyruvate + UDP-N-acetyl-alpha-D-glucosamine = UDP-N-acetyl-3-O-(1-carboxyvinyl)-alpha-D-glucosamine + phosphate. It functions in the pathway cell wall biogenesis; peptidoglycan biosynthesis. Its function is as follows. Cell wall formation. Adds enolpyruvyl to UDP-N-acetylglucosamine. The polypeptide is UDP-N-acetylglucosamine 1-carboxyvinyltransferase (Mycobacterium leprae (strain TN)).